A 261-amino-acid polypeptide reads, in one-letter code: Thiazole synthase (261 aa).

K97 (schiff-base intermediate with DXP) is an active-site residue. 1-deoxy-D-xylulose 5-phosphate is bound by residues G158, 184 to 185, and 206 to 207; these read AG and AS.

Belongs to the ThiG family. In terms of assembly, homotetramer. Forms heterodimers with either ThiH or ThiS.

It localises to the cytoplasm. The catalysed reaction is [ThiS sulfur-carrier protein]-C-terminal-Gly-aminoethanethioate + 2-iminoacetate + 1-deoxy-D-xylulose 5-phosphate = [ThiS sulfur-carrier protein]-C-terminal Gly-Gly + 2-[(2R,5Z)-2-carboxy-4-methylthiazol-5(2H)-ylidene]ethyl phosphate + 2 H2O + H(+). It participates in cofactor biosynthesis; thiamine diphosphate biosynthesis. Functionally, catalyzes the rearrangement of 1-deoxy-D-xylulose 5-phosphate (DXP) to produce the thiazole phosphate moiety of thiamine. Sulfur is provided by the thiocarboxylate moiety of the carrier protein ThiS. In vitro, sulfur can be provided by H(2)S. The sequence is that of Thiazole synthase from Corynebacterium diphtheriae (strain ATCC 700971 / NCTC 13129 / Biotype gravis).